We begin with the raw amino-acid sequence, 334 residues long: Heat shock factor 2-binding protein (334 aa).

An interaction with BRME1 region spans residues 14–51 (MGTKEEFVKVRKKDLERLTTEVMQIRDFLPRILNGEVL). Residues 49-122 (EVLESFQKLK…LLQQAEYCTE (74 aa)) adopt a coiled-coil conformation. The segment at 83–334 (ARLETVQADN…EDLRTLEHNV (252 aa)) is interaction with BRCA2.

Associates with HSF2. The interaction seems to occur between the trimerization domain of HSF2 and the N-terminal hydrophilic region of HSF2BP. Interacts (via C-terminus) with BNC1. Interacts (via N-terminus) with BRCA2 and BRME1; the interactions are direct and allow the formation of a ternary complex. The complex BRME1:HSF2BP:BRCA2 interacts with SPATA22, MEIOB and RAD51. In terms of processing, sumoylated by UBE2I in response to MEKK1-mediated stimuli. In terms of tissue distribution, testis specific. Overexpressed in some tumors.

The protein resides in the cytoplasm. It is found in the chromosome. Functionally, meiotic recombination factor component of recombination bridges involved in meiotic double-strand break repair. Modulates the localization of recombinases DMC1:RAD51 to meiotic double-strand break (DSB) sites through the interaction with BRCA2 and its recruitment during meiotic recombination. Indispensable for the DSB repair, homologous synapsis, and crossover formation that are needed for progression past metaphase I, is essential for spermatogenesis and male fertility. Required for proper recombinase recruitment in female meiosis. Inhibits BNC1 transcriptional activity during spermatogenesis, probably by sequestering it in the cytoplasm. May be involved in modulating HSF2 activation in testis. The polypeptide is Heat shock factor 2-binding protein (Homo sapiens (Human)).